Reading from the N-terminus, the 395-residue chain is Zinc finger protein 200 (395 aa).

The segment at 157 to 208 (VNGSNPEGEDPEREPVENEDYREKSSDDDEMDSSLVSQQPPDNQEKERLNTS) is disordered. The segment covering 169-181 (REPVENEDYREKS) has biased composition (basic and acidic residues). Residues 246 to 395 (RRTRRWYTCP…HSACKTRKQK (150 aa)) are interaction with PRMT3. 5 consecutive C2H2-type zinc fingers follow at residues 252-274 (YTCP…QRTH), 280-302 (YDCN…ERIH), 308-330 (YSCS…EGIH), 336-358 (FKCP…LQSH), and 364-386 (YGCK…EKTH).

As to quaternary structure, interacts (via C-terminus) with PRMT3 (via zinc-finger); the interaction is direct and required to localize protein arginine N-methyltransferase PRMT3 to the nucleus and inhibit its proteasomal degradation. As to expression, highly expressed in testis, weakly expressed in spleen, thymus, prostate, ovary, small intestine colon and peripheral blood leukocytes.

The protein resides in the nucleus. Functionally, localizes protein arginine N-methyltransferase PRMT3 to the nucleus. The polypeptide is Zinc finger protein 200 (ZNF200) (Homo sapiens (Human)).